The primary structure comprises 253 residues: Small ribosomal subunit protein uS2 (253 aa).

A disordered region spans residues 226–253 (QGADNADVEKELSESVEENSAEEVDDAE). The span at 239 to 253 (ESVEENSAEEVDDAE) shows a compositional bias: acidic residues.

The protein belongs to the universal ribosomal protein uS2 family.

The sequence is that of Small ribosomal subunit protein uS2 from Lactobacillus delbrueckii subsp. bulgaricus (strain ATCC 11842 / DSM 20081 / BCRC 10696 / JCM 1002 / NBRC 13953 / NCIMB 11778 / NCTC 12712 / WDCM 00102 / Lb 14).